Consider the following 654-residue polypeptide: Protein fem-1 homolog A-A (654 aa).

ANK repeat units lie at residues 2–31, 40–70, 82–111, 115–145, 149–178, 182–211, and 214–243; these read DLHTAVYNAAHDGKLPLLQKLLAGRGREEL, GGGTPLLIAARRGHLDVVEYLVDHCGASVEA, EGAPPLWAASAAGHLAVVRSLLRRGASVNR, TNSTPLRAACFDGHLDVVRYLVGEHKADLEV, HGHTCLMISCYKGHREIARYLLERGAQVNR, KGNTALHDCAESGSLEILQLLLGCHARMER, and YGMTPLLAASVTGHTNIVEYLIQEQPGHEQ. Ser-108 carries the phosphoserine modification. Residues 242 to 265 form a disordered region; the sequence is EQLSGTELPGEGSSQVAGNHCSTP. Residues 253–263 show a composition bias toward polar residues; sequence GSSQVAGNHCS. 2 TPR repeats span residues 283–317 and 375–408; these read VEALELLGATYVDKKRDLLGALKHWRRAMELRHQG and SYYIRYRGAVYADSGNFERCIRLWKYALDMQQNN. 2 ANK repeats span residues 519–561 and 565–594; these read NGFT…DPDS and DNNTPLHIAAQNNCPAIMDALIEAGAHMDA. Phosphoserine is present on Ser-608.

This sequence belongs to the fem-1 family. As to quaternary structure, component of a CRL2 E3 ubiquitin-protein ligase complex, also named ECS (Elongin BC-CUL2/5-SOCS-box protein) complex, composed of CUL2, Elongin BC (ELOB and ELOC), RBX1 and substrate-specific adapter FEM1A. Interacts with PTGER4. Interacts with NFKB1; the interaction is direct. Phosphorylated; highly phosphorylated in myoblasts and myotubes. Phosphorylation at Ser-108 and Ser-608 promote PGE2-EP4-mediated inhibition of inflammation. Dephosphorylated by protein phosphatase 2A (PP2A). Preferentially expressed in cardiac muscle, brain and liver (at protein level). Also expressed in skeletal muscle.

It is found in the mitochondrion. Its subcellular location is the cytoplasm. It functions in the pathway protein modification; protein ubiquitination. Substrate-recognition component of a Cul2-RING (CRL2) E3 ubiquitin-protein ligase complex of the DesCEND (destruction via C-end degrons) pathway, which recognizes a C-degron located at the extreme C terminus of target proteins, leading to their ubiquitination and degradation. The C-degron recognized by the DesCEND pathway is usually a motif of less than ten residues and can be present in full-length proteins, truncated proteins or proteolytically cleaved forms. The CRL2(FEM1A) complex specifically recognizes proteins with an arginine at the C-terminus: recognizes and binds proteins ending with -Lys/Arg-Xaa-Arg and -Lys/Arg-Xaa-Xaa-Arg C-degrons, such as SIL1 or OR51B2, leading to their ubiquitination and degradation. Involved in PGE2-EP4-mediated inhibition of inflammation of macrophages via interaction with NFKB1 and PTGER4. Promotes inflammation in brain microglia through MAP2K4/MKK4-mediated signaling. This chain is Protein fem-1 homolog A-A, found in Mus musculus (Mouse).